The following is a 503-amino-acid chain: Efflux pump vrtL (503 aa).

The segment at 1-59 (MSKLSDNHSSASEGEKEAGDLESGPTAISSEPSFDDADRDPNLITWDGPKDPENPKNWP) is disordered. Asn7 carries an N-linked (GlcNAc...) asparagine glycan. The next 12 helical transmembrane spans lie at 68-88 (WTVSLFVFISPVSSSMIAPAM), 101-121 (IEIYLSLSIFILAYSIGPIFF), 133-153 (LLQISNVWYLAWNLGCGFATT), 162-182 (FLAGIGGSAPLAIGGGAISDM), 194-214 (VYTLGPLLGPVVGPIAGGFIA), 221-241 (WVFWSTSAAALAVQVVGFFWL), 295-315 (IVFCMAIYMAYLFGISYLMFA), 329-349 (PGIGGLNYLSIAIGSFIGLFF), 377-397 (SLAVGSVISTIGLFWYGWSIG), 401-421 (WIMPNIGALIFAMGTISCLQG), 432-454 (TYAASAMAACAVLRSLCGFGFPL), and 471-491 (LLAFITMVVGWGAPFAFWHFG).

It belongs to the major facilitator superfamily.

The protein localises to the membrane. Efflux pump; part of the gene cluster that mediates the biosynthesis of viridicatumtoxin, a tetracycline-like fungal meroterpenoid with a unique, fused spirobicyclic ring system. This Penicillium aethiopicum protein is Efflux pump vrtL.